The following is a 161-amino-acid chain: Phosphopantetheine adenylyltransferase (161 aa).

Thr-10 contacts substrate. Residues 10–11 and His-18 each bind ATP; that span reads TF. Lys-42, Leu-74, and Arg-88 together coordinate substrate. ATP-binding positions include 89-91, Glu-99, and 123-129; these read GVR and YIHISST.

This sequence belongs to the bacterial CoaD family. Homohexamer. The cofactor is Mg(2+).

The protein localises to the cytoplasm. The catalysed reaction is (R)-4'-phosphopantetheine + ATP + H(+) = 3'-dephospho-CoA + diphosphate. It functions in the pathway cofactor biosynthesis; coenzyme A biosynthesis; CoA from (R)-pantothenate: step 4/5. Its function is as follows. Reversibly transfers an adenylyl group from ATP to 4'-phosphopantetheine, yielding dephospho-CoA (dPCoA) and pyrophosphate. In Aquifex aeolicus (strain VF5), this protein is Phosphopantetheine adenylyltransferase.